Here is a 325-residue protein sequence, read N- to C-terminus: Mitochondrial citrate transporter C (325 aa).

Solcar repeat units follow at residues 15-105 (ASPA…YKQM), 117-208 (KATF…LKAF), and 221-310 (LPSY…LKGK). 6 helical membrane passes run 21–41 (LIAG…LDTI), 82–102 (GAVL…YESY), 121–141 (LAGL…MEVV), 187–207 (TALR…ELKA), 221–241 (LPSY…PFSN), and 282–303 (FYKG…TFTV).

It belongs to the mitochondrial carrier (TC 2.A.29) family.

Its subcellular location is the mitochondrion inner membrane. Its function is as follows. Mitochondrial transporter that does not mediate citrate export from mitochondria to cytoplasm. Its exact function has still to be determined. The sequence is that of Mitochondrial citrate transporter C from Aspergillus niger (strain ATCC 1015 / CBS 113.46 / FGSC A1144 / LSHB Ac4 / NCTC 3858a / NRRL 328 / USDA 3528.7).